The following is a 205-amino-acid chain: Purine catabolism protein PucB (205 aa).

It functions in the pathway purine metabolism; hypoxanthine degradation. In terms of biological role, required for xanthine dehydrogenase activity. Could be involved in formation of the molybdenum cofactor required by xanthine dehydrogenase. The protein is Purine catabolism protein PucB (pucB) of Bacillus subtilis (strain 168).